A 186-amino-acid polypeptide reads, in one-letter code: Ribosome-recycling factor (186 aa).

It belongs to the RRF family.

It is found in the cytoplasm. Responsible for the release of ribosomes from messenger RNA at the termination of protein biosynthesis. May increase the efficiency of translation by recycling ribosomes from one round of translation to another. The sequence is that of Ribosome-recycling factor from Rickettsia prowazekii (strain Madrid E).